The primary structure comprises 636 residues: 3-phosphoinositide-dependent protein kinase 1 (636 aa).

Composition is skewed to low complexity over residues 1–20 and 27–37; these read MEDLTPTNTSLDTTTTNNDT and APTTLNLTPTA. The disordered stretch occupies residues 1 to 45; that stretch reads MEDLTPTNTSLDTTTTNNDTTSDREAAPTTLNLTPTASESENSLS. Positions 69–364 constitute a Protein kinase domain; that stretch reads FMFLQSMGEG…SQELMAHKFF (296 aa). Residues 79 to 81 and Lys-98 each bind ATP; that span reads AYS. The PIF-pocket stretch occupies residues 100–149; sequence LQKSYLNRHQKMDAIIREKNILTYLSQECGGHPFVTQLYTHFHDQARIYF. Residues 152-154 and Asp-158 contribute to the ATP site; that span reads GLV. Asp-197 serves as the catalytic Proton acceptor. Asp-201 and Asp-215 together coordinate ATP. Disordered regions lie at residues 233 to 264 and 593 to 636; these read TDANQASSRSSDSGSPPPTRFYSDEEVPEENT and KKSR…KKSP. The stretch at 550 to 631 forms a coiled coil; the sequence is DLEKKADEWC…QVSKKLSMQM (82 aa). Residues 597–624 show a composition bias toward basic and acidic residues; sequence KEMMREQKALRRKQEKEEKKALKAEQVS.

The protein belongs to the protein kinase superfamily. AGC Ser/Thr protein kinase family. PDPK1 subfamily. Interacts directly with sgk-1, akt-1 and akt-2.

Its subcellular location is the cytoplasm. It carries out the reaction L-seryl-[protein] + ATP = O-phospho-L-seryl-[protein] + ADP + H(+). The enzyme catalyses L-threonyl-[protein] + ATP = O-phospho-L-threonyl-[protein] + ADP + H(+). In terms of biological role, involved in the daf-2/insulin receptor-like transduction pathway, which controls longevity and prevents developmental arrest at the dauer stage. Phosphorylates and activates sgk-1, akt-1 and akt-2. The chain is 3-phosphoinositide-dependent protein kinase 1 from Caenorhabditis elegans.